Consider the following 1250-residue polypeptide: Bifunctional autolysin (1250 aa).

The signal sequence occupies residues 1-29 (MAKKFNYKLPSMVALTLVGSAVTAHQVQA). Positions 103 to 138 (GDTRANQSATTNNTQPVAKSTSTTAPKTNTNVTNAG) are enriched in polar residues. 2 disordered regions span residues 103–151 (GDTR…NSEN) and 173–219 (AAAP…KYKP). Positions 173–196 (AAAPKAATTSAPKAKTEATPKVTT) are enriched in low complexity. The interval 199-769 (ASAQPRSVAA…AVAQPKTAVK (571 aa)) is N-acetylmuramoyl-L-alanine amidase. GW domains lie at 437–511 (TVAA…YNTA), 513–587 (SPVN…DTAK), 606–680 (TVSS…YNNA), 682–756 (SPVN…VPAA), 778–853 (TTQT…VQNL), 855–930 (KEVK…APTA), and 937–1011 (AAKD…KELI). The endo-beta-N-acetylglucosaminidase stretch occupies residues 770–1250 (AYTVTKPQTT…GKYFDIPQYK (481 aa)).

In the N-terminal section; belongs to the N-acetylmuramoyl-L-alanine amidase 2 family. The protein in the C-terminal section; belongs to the glycosyl hydrolase 73 family. As to quaternary structure, oligomer; forms a ring structure at the cell surface which is important for efficient partitioning of daughter cells after cell division. In terms of processing, undergoes proteolytic processing to generate the two extracellular lytic enzymes, probably at the septal region on the cell surface.

The protein resides in the secreted. The catalysed reaction is Hydrolyzes the link between N-acetylmuramoyl residues and L-amino acid residues in certain cell-wall glycopeptides.. The enzyme catalyses an N(4)-(oligosaccharide-(1-&gt;3)-[oligosaccharide-(1-&gt;6)]-beta-D-Man-(1-&gt;4)-beta-D-GlcNAc-(1-&gt;4)-alpha-D-GlcNAc)-L-asparaginyl-[protein] + H2O = an oligosaccharide-(1-&gt;3)-[oligosaccharide-(1-&gt;6)]-beta-D-Man-(1-&gt;4)-D-GlcNAc + N(4)-(N-acetyl-beta-D-glucosaminyl)-L-asparaginyl-[protein]. Its function is as follows. Endohydrolysis of the di-N-acetylchitobiosyl unit in high-mannose glycopeptides and glycoproteins containing the -[(Man)5(GlcNAc)2]-Asn structure. One N-acetyl-D-glucosamine residue remains attached to the protein; the rest of the oligosaccharide is released intact. Cleaves the peptidoglycan connecting the daughter cells at the end of the cell division cycle, resulting in the separation of the two newly divided cells. Acts as an autolysin in penicillin-induced lysis. The sequence is that of Bifunctional autolysin (atl) from Staphylococcus aureus (strain MSSA476).